The sequence spans 1464 residues: DNA polymerase III PolC-type (1464 aa).

The 157-residue stretch at 426–582 (YVVFDVETTG…YDAEATGRLL (157 aa)) folds into the Exonuclease domain.

Belongs to the DNA polymerase type-C family. PolC subfamily.

Its subcellular location is the cytoplasm. The catalysed reaction is DNA(n) + a 2'-deoxyribonucleoside 5'-triphosphate = DNA(n+1) + diphosphate. Its function is as follows. Required for replicative DNA synthesis. This DNA polymerase also exhibits 3' to 5' exonuclease activity. The chain is DNA polymerase III PolC-type from Streptococcus thermophilus (strain CNRZ 1066).